The sequence spans 255 residues: 5'-nucleotidase SurE (255 aa).

Residues Asp-8, Asp-9, Ser-39, and Asn-95 each coordinate a divalent metal cation.

It belongs to the SurE nucleotidase family. It depends on a divalent metal cation as a cofactor.

The protein resides in the cytoplasm. The catalysed reaction is a ribonucleoside 5'-phosphate + H2O = a ribonucleoside + phosphate. Functionally, nucleotidase that shows phosphatase activity on nucleoside 5'-monophosphates. The chain is 5'-nucleotidase SurE from Rubrivivax gelatinosus (strain NBRC 100245 / IL144).